The sequence spans 113 residues: Large ribosomal subunit protein eL31A (113 aa).

This sequence belongs to the eukaryotic ribosomal protein eL31 family. Component of the large ribosomal subunit (LSU). Mature yeast ribosomes consist of a small (40S) and a large (60S) subunit. The 40S small subunit contains 1 molecule of ribosomal RNA (18S rRNA) and 33 different proteins (encoded by 57 genes). The large 60S subunit contains 3 rRNA molecules (25S, 5.8S and 5S rRNA) and 46 different proteins (encoded by 81 genes).

The protein resides in the cytoplasm. Component of the ribosome, a large ribonucleoprotein complex responsible for the synthesis of proteins in the cell. The small ribosomal subunit (SSU) binds messenger RNAs (mRNAs) and translates the encoded message by selecting cognate aminoacyl-transfer RNA (tRNA) molecules. The large subunit (LSU) contains the ribosomal catalytic site termed the peptidyl transferase center (PTC), which catalyzes the formation of peptide bonds, thereby polymerizing the amino acids delivered by tRNAs into a polypeptide chain. The nascent polypeptides leave the ribosome through a tunnel in the LSU and interact with protein factors that function in enzymatic processing, targeting, and the membrane insertion of nascent chains at the exit of the ribosomal tunnel. The polypeptide is Large ribosomal subunit protein eL31A (Saccharomyces cerevisiae (strain ATCC 204508 / S288c) (Baker's yeast)).